A 147-amino-acid chain; its full sequence is Hemoglobin subunit epsilon (147 aa).

Residues 3-147 (HFTAEEKAAI…VAIALGHKYH (145 aa)) enclose the Globin domain. 2 positions are modified to phosphoserine: serine 14 and serine 51. Residues histidine 64 and histidine 93 each coordinate heme b.

Belongs to the globin family. In terms of assembly, heterotetramer of two alpha chains and two epsilon chains in early embryonic hemoglobin Gower-2; two zeta chains and two epsilon chains in early embryonic hemoglobin Gower-1. In terms of tissue distribution, red blood cells.

In terms of biological role, the epsilon chain is a beta-type chain of early mammalian embryonic hemoglobin. This chain is Hemoglobin subunit epsilon (HBE1), found in Leontopithecus rosalia (Golden lion tamarin).